A 423-amino-acid chain; its full sequence is Glutamate-1-semialdehyde 2,1-aminomutase (423 aa).

Lysine 263 bears the N6-(pyridoxal phosphate)lysine mark.

This sequence belongs to the class-III pyridoxal-phosphate-dependent aminotransferase family. HemL subfamily. Requires pyridoxal 5'-phosphate as cofactor.

Its subcellular location is the cytoplasm. It catalyses the reaction (S)-4-amino-5-oxopentanoate = 5-aminolevulinate. It functions in the pathway porphyrin-containing compound metabolism; protoporphyrin-IX biosynthesis; 5-aminolevulinate from L-glutamyl-tRNA(Glu): step 2/2. This Ignicoccus hospitalis (strain KIN4/I / DSM 18386 / JCM 14125) protein is Glutamate-1-semialdehyde 2,1-aminomutase.